We begin with the raw amino-acid sequence, 70 residues long: SPbeta prophage-derived uncharacterized protein YorZ (70 aa).

The polypeptide is SPbeta prophage-derived uncharacterized protein YorZ (yorZ) (Bacillus subtilis (strain 168)).